We begin with the raw amino-acid sequence, 70 residues long: Large ribosomal subunit protein eL24 (70 aa).

Residues Cys-6, Cys-9, Cys-32, and Cys-36 each contribute to the Zn(2+) site. The segment at 6 to 36 (CSYCGRPIPPGYGIMYVRVDGVVLRFCSRRC) adopts a C4-type zinc-finger fold.

Belongs to the eukaryotic ribosomal protein eL24 family. As to quaternary structure, part of the 50S ribosomal subunit. Forms a cluster with proteins L3 and L14. Zn(2+) serves as cofactor.

Binds to the 23S rRNA. This chain is Large ribosomal subunit protein eL24, found in Caldivirga maquilingensis (strain ATCC 700844 / DSM 13496 / JCM 10307 / IC-167).